The chain runs to 217 residues: Large ribosomal subunit protein uL4 (217 aa).

The interval 46–102 is disordered; that stretch reads KRQGTHSAKTRAEVSGGGRKPFRQKGTGRARQGSIRAPHFTGGGISHGPKPRDYSQR.

This sequence belongs to the universal ribosomal protein uL4 family. In terms of assembly, part of the 50S ribosomal subunit.

In terms of biological role, one of the primary rRNA binding proteins, this protein initially binds near the 5'-end of the 23S rRNA. It is important during the early stages of 50S assembly. It makes multiple contacts with different domains of the 23S rRNA in the assembled 50S subunit and ribosome. Its function is as follows. Forms part of the polypeptide exit tunnel. This Corynebacterium diphtheriae (strain ATCC 700971 / NCTC 13129 / Biotype gravis) protein is Large ribosomal subunit protein uL4.